A 237-amino-acid polypeptide reads, in one-letter code: Probable transcriptional regulatory protein WS1016 (237 aa).

This sequence belongs to the TACO1 family.

It localises to the cytoplasm. This Wolinella succinogenes (strain ATCC 29543 / DSM 1740 / CCUG 13145 / JCM 31913 / LMG 7466 / NCTC 11488 / FDC 602W) (Vibrio succinogenes) protein is Probable transcriptional regulatory protein WS1016.